A 445-amino-acid chain; its full sequence is GTPase Der (445 aa).

2 consecutive EngA-type G domains span residues 3–167 (PVIA…YAGQ) and 180–353 (VKIA…AAAM). GTP is bound by residues 9–16 (GRPNVGKS), 56–60 (DTGGF), 119–122 (NKAE), 186–193 (GRPNVGKS), 233–237 (DTAGL), and 298–301 (NKWD). In terms of domain architecture, KH-like spans 354–438 (AKLPTPKLTR…PLRIEFRSST (85 aa)).

The protein belongs to the TRAFAC class TrmE-Era-EngA-EngB-Septin-like GTPase superfamily. EngA (Der) GTPase family. In terms of assembly, associates with the 50S ribosomal subunit.

GTPase that plays an essential role in the late steps of ribosome biogenesis. The protein is GTPase Der of Paraburkholderia xenovorans (strain LB400).